Reading from the N-terminus, the 373-residue chain is Putative glutamate--cysteine ligase 2-1 (373 aa).

The protein belongs to the glutamate--cysteine ligase type 2 family. YbdK subfamily.

It catalyses the reaction L-cysteine + L-glutamate + ATP = gamma-L-glutamyl-L-cysteine + ADP + phosphate + H(+). Functionally, ATP-dependent carboxylate-amine ligase which exhibits weak glutamate--cysteine ligase activity. This chain is Putative glutamate--cysteine ligase 2-1, found in Legionella pneumophila (strain Lens).